The primary structure comprises 579 residues: Altered inheritance of mitochondria protein 9, mitochondrial (579 aa).

A mitochondrion-targeting transit peptide spans 1 to 36 (MQSWNSQSFLSSHFTMLRYACKRAVPRLNAASGLRF).

It belongs to the AIM9 family.

The protein localises to the mitochondrion. The protein is Altered inheritance of mitochondria protein 9, mitochondrial (AIM9) of Yarrowia lipolytica (strain CLIB 122 / E 150) (Yeast).